An 847-amino-acid polypeptide reads, in one-letter code: Histidine decarboxylase (847 aa).

2 residues coordinate substrate: Phe-80 and His-193. Lys-304 is subject to N6-(pyridoxal phosphate)lysine. A compositionally biased stretch (polar residues) spans Gly-575–Gln-605. Disordered stretches follow at residues Gly-575 to Pro-662, Gln-769 to Leu-798, and Ser-813 to Leu-847. Positions Glu-606–Glu-616 are enriched in acidic residues. Composition is skewed to low complexity over residues Ser-634–Ser-657 and Gln-769–Gly-787. Over residues Asp-832 to Leu-847 the composition is skewed to polar residues.

Belongs to the group II decarboxylase family. As to quaternary structure, homodimer. Requires pyridoxal 5'-phosphate as cofactor. Localized primarily to the photoreceptors, in the eye.

It carries out the reaction L-histidine + H(+) = histamine + CO2. Functionally, required in photoreceptor transmitter synthesis. Catlayzes the conversion of L-histidine to histamine. The protein is Histidine decarboxylase (Hdc) of Drosophila melanogaster (Fruit fly).